A 133-amino-acid polypeptide reads, in one-letter code: Large ribosomal subunit protein bL20 (133 aa).

Belongs to the bacterial ribosomal protein bL20 family.

Binds directly to 23S ribosomal RNA and is necessary for the in vitro assembly process of the 50S ribosomal subunit. It is not involved in the protein synthesizing functions of that subunit. The protein is Large ribosomal subunit protein bL20 of Bartonella henselae (strain ATCC 49882 / DSM 28221 / CCUG 30454 / Houston 1) (Rochalimaea henselae).